The sequence spans 461 residues: Piperine synthase (461 aa).

Catalysis depends on proton acceptor residues H168 and D387. A Microbody targeting signal motif is present at residues S459 to M461.

The protein belongs to the plant acyltransferase family. In terms of assembly, monomer. As to expression, confined to immature fruits perisperm. Also detectable in roots.

The protein localises to the cytoplasm. The catalysed reaction is piperidine + (E,E)-piperoyl-CoA = piperine + CoA + H(+). It carries out the reaction pyrrolidine + (E,E)-piperoyl-CoA = piperyline + CoA + H(+). The enzyme catalyses (E,E)-piperoyl-CoA + 2-methylpropan-1-amine = (E,E)-piperlonguminine + CoA + H(+). Its pathway is aromatic compound metabolism. Involved in the biosynthesis of aromatic piperamides natural products such as piperine (1-piperoyl-piperidine), the pungent principle contributing, together with several terpenoids, to the aromatic properties of black pepper fruits, and displaying numerous pharmacological activities such as antiproliferative, antitumor, antiangiogenesis, antioxidant, antidiabetic, antiobesity, cardioprotective, antimicrobial, antiaging, and immunomodulatory effects. Mediates mainly the conversion of piperidine and piperoyl-CoA to piperine. Can also use pyrrolidine and isobutylamine as acceptors and 3,4-methylenedioxycinnamoyl-CoA as an alternative CoA-donor with a lower efficiency. The sequence is that of Piperine synthase from Piper nigrum (Black pepper).